The primary structure comprises 243 residues: Probable intron-encoded endonuclease aI3 (243 aa).

The protein belongs to the LAGLIDADG endonuclease family.

Its subcellular location is the mitochondrion. Its function is as follows. Mitochondrial DNA endonuclease involved in intron homing. This chain is Probable intron-encoded endonuclease aI3 (aI3), found in Dictyostelium citrinum (Slime mold).